Reading from the N-terminus, the 307-residue chain is MENKSRYKTIDHVICVEENRKIHVWETLPKENSPKRKNTLIIASGFARRMDHFAGLAEYLSQNGFHVIRYDSLHHVGLSSGTIDEFTMSIGKQSLLAVVDWLNTRKINNLGMLASSLSARIAYASLSEINVSFLITAVGVVNLRYTLERALGFDYLSLPIDELPDNLDFEGHKLGAEVFARDCFDSGWEDLTSTINSMMHLDIPFIAFTANNDDWVKQDEVITLLSSIRSHQCKIYSLLGSSHDLGENLVVLRNFYQSVTKAAIAMDNGCLDIDVDIIEPSFEHLTIAAVNERRMKIEIENQVISLS.

Active-site charge relay system residues include serine 116, aspartate 213, and histidine 243.

It belongs to the LuxD family.

Its pathway is lipid metabolism; fatty acid reduction for biolumincescence. Its function is as follows. Acyl transferase is part of the fatty acid reductase system required for aldehyde biosynthesis; it produces fatty acids for the luminescent reaction. This Photorhabdus luminescens (Xenorhabdus luminescens) protein is Acyl transferase.